A 506-amino-acid polypeptide reads, in one-letter code: Maturase K (506 aa).

It belongs to the intron maturase 2 family. MatK subfamily.

The protein resides in the plastid. It localises to the chloroplast. Usually encoded in the trnK tRNA gene intron. Probably assists in splicing its own and other chloroplast group II introns. This is Maturase K from Trifolium incarnatum (Crimson clover).